Here is a 134-residue protein sequence, read N- to C-terminus: Urease subunit beta (134 aa).

Belongs to the urease beta subunit family. Heterotrimer of UreA (gamma), UreB (beta) and UreC (alpha) subunits. Three heterotrimers associate to form the active enzyme.

It is found in the cytoplasm. The enzyme catalyses urea + 2 H2O + H(+) = hydrogencarbonate + 2 NH4(+). The protein operates within nitrogen metabolism; urea degradation; CO(2) and NH(3) from urea (urease route): step 1/1. The polypeptide is Urease subunit beta (Staphylococcus saprophyticus subsp. saprophyticus (strain ATCC 15305 / DSM 20229 / NCIMB 8711 / NCTC 7292 / S-41)).